Here is a 110-residue protein sequence, read N- to C-terminus: Pathogenesis-related protein (110 aa).

An N-terminal signal peptide occupies residues 1–19 (AFLLAATLTISSHMQEAGA).

Belongs to the thaumatin family.

This is Pathogenesis-related protein from Juniperus virginiana (Eastern redcedar).